The following is a 160-amino-acid chain: Large ribosomal subunit protein bL17 (160 aa).

The tract at residues 128–160 is disordered; it reads KKATKTRRSRKRKSADVVVEAAPAEETPKAAEE. Residues 129 to 140 are compositionally biased toward basic residues; that stretch reads KATKTRRSRKRK.

This sequence belongs to the bacterial ribosomal protein bL17 family. As to quaternary structure, part of the 50S ribosomal subunit. Contacts protein L32.

This is Large ribosomal subunit protein bL17 from Porphyromonas gingivalis (strain ATCC 33277 / DSM 20709 / CIP 103683 / JCM 12257 / NCTC 11834 / 2561).